A 582-amino-acid chain; its full sequence is 5-aminolevulinate synthase, erythroid-specific, mitochondrial (582 aa).

Residue Arg158 participates in succinyl-CoA binding. Residues Cys253 and Phe254 each coordinate pyridoxal 5'-phosphate. Positions 275 and 294 each coordinate succinyl-CoA. Pyridoxal 5'-phosphate contacts are provided by Ser327, His355, and Thr383. Lys386 is an active-site residue. An N6-(pyridoxal phosphate)lysine modification is found at Lys386. Pyridoxal 5'-phosphate-binding residues include Thr415 and Thr416. Thr503 is a succinyl-CoA binding site.

Belongs to the class-II pyridoxal-phosphate-dependent aminotransferase family. As to quaternary structure, homodimer. Requires pyridoxal 5'-phosphate as cofactor.

Its subcellular location is the mitochondrion inner membrane. The catalysed reaction is succinyl-CoA + glycine + H(+) = 5-aminolevulinate + CO2 + CoA. The protein operates within porphyrin-containing compound metabolism; protoporphyrin-IX biosynthesis; 5-aminolevulinate from glycine: step 1/1. In terms of biological role, catalyzes the pyridoxal 5'-phosphate (PLP)-dependent condensation of succinyl-CoA and glycine to form aminolevulinic acid (ALA), with CoA and CO2 as by-products. Contributes significantly to heme formation during erythropoiesis. The chain is 5-aminolevulinate synthase, erythroid-specific, mitochondrial (alas2) from Opsanus tau (Oyster toadfish).